Reading from the N-terminus, the 695-residue chain is Hypersensitivity response secretion protein HrpI (695 aa).

The next 7 membrane-spanning stretches (helical) occupy residues 21 to 38 (LVGA…ITPL), 45 to 61 (VLIA…IMLA), 68 to 92 (LAFS…VSTT), 111 to 135 (FVVG…FLVI), 203 to 223 (AIAS…IGVL), 244 to 262 (GLIA…GMII), and 311 to 327 (VFIT…LLQL).

It belongs to the FHIPEP (flagella/HR/invasion proteins export pore) family.

It is found in the cell inner membrane. Functionally, involved in the secretion of harpin-pss; a proteinaceous elicitor of the hypersensitivity response in plants. This chain is Hypersensitivity response secretion protein HrpI (hrpI), found in Pseudomonas syringae pv. syringae.